A 431-amino-acid chain; its full sequence is 5-methylthioadenosine/S-adenosylhomocysteine deaminase (431 aa).

Zn(2+) is bound by residues histidine 61 and histidine 63. Substrate-binding residues include glutamate 90 and histidine 183. Histidine 210 provides a ligand contact to Zn(2+). Substrate-binding residues include glutamate 213 and aspartate 298. Residue aspartate 298 participates in Zn(2+) binding.

This sequence belongs to the metallo-dependent hydrolases superfamily. MTA/SAH deaminase family. It depends on Zn(2+) as a cofactor.

It carries out the reaction S-adenosyl-L-homocysteine + H2O + H(+) = S-inosyl-L-homocysteine + NH4(+). It catalyses the reaction S-methyl-5'-thioadenosine + H2O + H(+) = S-methyl-5'-thioinosine + NH4(+). Functionally, catalyzes the deamination of 5-methylthioadenosine and S-adenosyl-L-homocysteine into 5-methylthioinosine and S-inosyl-L-homocysteine, respectively. Is also able to deaminate adenosine. The chain is 5-methylthioadenosine/S-adenosylhomocysteine deaminase from Halobacterium salinarum (strain ATCC 700922 / JCM 11081 / NRC-1) (Halobacterium halobium).